Reading from the N-terminus, the 73-residue chain is Large ribosomal subunit protein uL29 (73 aa).

The protein belongs to the universal ribosomal protein uL29 family.

The polypeptide is Large ribosomal subunit protein uL29 (rpl29) (Saccharolobus solfataricus (strain ATCC 35092 / DSM 1617 / JCM 11322 / P2) (Sulfolobus solfataricus)).